We begin with the raw amino-acid sequence, 245 residues long: 1-(5-phosphoribosyl)-5-[(5-phosphoribosylamino)methylideneamino] imidazole-4-carboxamide isomerase (245 aa).

Aspartate 7 acts as the Proton acceptor in catalysis. Residue aspartate 129 is the Proton donor of the active site.

It belongs to the HisA/HisF family.

Its subcellular location is the cytoplasm. It catalyses the reaction 1-(5-phospho-beta-D-ribosyl)-5-[(5-phospho-beta-D-ribosylamino)methylideneamino]imidazole-4-carboxamide = 5-[(5-phospho-1-deoxy-D-ribulos-1-ylimino)methylamino]-1-(5-phospho-beta-D-ribosyl)imidazole-4-carboxamide. The protein operates within amino-acid biosynthesis; L-histidine biosynthesis; L-histidine from 5-phospho-alpha-D-ribose 1-diphosphate: step 4/9. This Erwinia tasmaniensis (strain DSM 17950 / CFBP 7177 / CIP 109463 / NCPPB 4357 / Et1/99) protein is 1-(5-phosphoribosyl)-5-[(5-phosphoribosylamino)methylideneamino] imidazole-4-carboxamide isomerase.